The primary structure comprises 397 residues: Acetyl-CoA acetyltransferase, cytosolic (397 aa).

Met-1 is modified (N-acetylmethionine). Cys-92 serves as the catalytic Acyl-thioester intermediate. The residue at position 200 (Lys-200) is an N6-acetyllysine. Positions 223 and 226 each coordinate CoA. 2 positions are modified to N6-acetyllysine: Lys-233 and Lys-235. Residue Ser-252 coordinates CoA. Catalysis depends on Cys-383, which acts as the Proton donor/acceptor.

It belongs to the thiolase-like superfamily. Thiolase family. As to quaternary structure, homotetramer.

The protein localises to the cytoplasm. It is found in the cytosol. It catalyses the reaction 2 acetyl-CoA = acetoacetyl-CoA + CoA. It functions in the pathway lipid metabolism; fatty acid metabolism. In terms of biological role, involved in the biosynthetic pathway of cholesterol. This Mus musculus (Mouse) protein is Acetyl-CoA acetyltransferase, cytosolic (Acat2).